The sequence spans 346 residues: Flap endonuclease 1 (346 aa).

The interval 1–102 (MGVTELGKLI…AEIEERRKAK (102 aa)) is N-domain. The Mg(2+) site is built by Asp31, Asp84, Glu156, Glu158, Asp177, Asp179, and Asp239. The I-domain stretch occupies residues 120-261 (EVAKYAKRAI…RALKLIWEFG (142 aa)).

The protein belongs to the XPG/RAD2 endonuclease family. FEN1 subfamily. In terms of assembly, interacts with PCNA. PCNA stimulates the nuclease activity without altering cleavage specificity. The cofactor is Mg(2+).

Functionally, structure-specific nuclease with 5'-flap endonuclease and 5'-3' exonuclease activities involved in DNA replication and repair. During DNA replication, cleaves the 5'-overhanging flap structure that is generated by displacement synthesis when DNA polymerase encounters the 5'-end of a downstream Okazaki fragment. Binds the unpaired 3'-DNA end and kinks the DNA to facilitate 5' cleavage specificity. Cleaves one nucleotide into the double-stranded DNA from the junction in flap DNA, leaving a nick for ligation. Also involved in the base excision repair (BER) pathway. Acts as a genome stabilization factor that prevents flaps from equilibrating into structures that lead to duplications and deletions. Also possesses 5'-3' exonuclease activity on nicked or gapped double-stranded DNA. This is Flap endonuclease 1 from Pyrobaculum arsenaticum (strain DSM 13514 / JCM 11321 / PZ6).